The sequence spans 509 residues: Aldehyde dehydrogenase 1A1 (509 aa).

Residues 175 to 178, 201 to 204, 234 to 235, 254 to 255, and 277 to 279 each bind NAD(+); these read IPWN, KPAE, GP, GS, and ELG. Catalysis depends on glutamate 277, which acts as the Proton acceptor. Residue cysteine 311 is the Nucleophile of the active site. NAD(+) is bound by residues 357–361 and 408–410; these read EQFQK and EIF.

This sequence belongs to the aldehyde dehydrogenase family. As to quaternary structure, homotetramer.

It localises to the cytoplasm. It is found in the cytosol. The protein localises to the cell projection. Its subcellular location is the axon. It carries out the reaction an aldehyde + NAD(+) + H2O = a carboxylate + NADH + 2 H(+). The enzyme catalyses all-trans-retinal + NAD(+) + H2O = all-trans-retinoate + NADH + 2 H(+). The catalysed reaction is 9-cis-retinal + NAD(+) + H2O = 9-cis-retinoate + NADH + 2 H(+). It catalyses the reaction 11-cis-retinal + NAD(+) + H2O = 11-cis-retinoate + NADH + 2 H(+). It carries out the reaction 13-cis-retinal + NAD(+) + H2O = 13-cis-retinoate + NADH + 2 H(+). The enzyme catalyses 3-deoxyglucosone + NAD(+) + H2O = 2-dehydro-3-deoxy-D-gluconate + NADH + 2 H(+). The catalysed reaction is (E)-4-hydroxynon-2-enal + NAD(+) + H2O = (E)-4-hydroxynon-2-enoate + NADH + 2 H(+). It catalyses the reaction malonaldehyde + NAD(+) + H2O = 3-oxopropanoate + NADH + 2 H(+). It carries out the reaction hexanal + NAD(+) + H2O = hexanoate + NADH + 2 H(+). The enzyme catalyses propanal + NAD(+) + H2O = propanoate + NADH + 2 H(+). The catalysed reaction is acetaldehyde + NAD(+) + H2O = acetate + NADH + 2 H(+). It catalyses the reaction benzaldehyde + NAD(+) + H2O = benzoate + NADH + 2 H(+). It carries out the reaction 4-aminobutanal + NAD(+) + H2O = 4-aminobutanoate + NADH + 2 H(+). The protein operates within cofactor metabolism; retinol metabolism. In terms of biological role, cytosolic dehydrogenase that catalyzes the irreversible oxidation of a wide range of aldehydes to their corresponding carboxylic acid. Functions downstream of retinol dehydrogenases and catalyzes the oxidation of retinaldehyde into retinoic acid, the second step in the oxidation of retinol/vitamin A into retinoic acid. This pathway is crucial to control the levels of retinol and retinoic acid, two important molecules which excess can be teratogenic and cytotoxic. Also oxidizes aldehydes resulting from lipid peroxidation like (E)-4-hydroxynon-2-enal/HNE, malonaldehyde and hexanal that form protein adducts and are highly cytotoxic. By participating for instance to the clearance of (E)-4-hydroxynon-2-enal/HNE in the lens epithelium prevents the formation of HNE-protein adducts and lens opacification. Also functions downstream of fructosamine-3-kinase in the fructosamine degradation pathway by catalyzing the oxidation of 3-deoxyglucosone, the carbohydrate product of fructosamine 3-phosphate decomposition, which is itself a potent glycating agent that may react with lysine and arginine side-chains of proteins. Also has an aminobutyraldehyde dehydrogenase activity and is probably part of an alternative pathway for the biosynthesis of GABA/4-aminobutanoate in midbrain, thereby playing a role in GABAergic synaptic transmission. This is Aldehyde dehydrogenase 1A1 from Gallus gallus (Chicken).